A 528-amino-acid chain; its full sequence is MMWWFLLIGLASAAATASSASSASFESRCQHFHKEIHLQNVHVLSTTYVPIGSNIPMVYNPPICGGTASSSISTIQFCQVALNVTTSDKSQFFMEAWLPSNYTGRFLSTGNGGLNGCVSYADMVYATQYGFATIGTNNGHFGDTGQYFLNNPEVIEDFAYRALHTGTVVGKALTKLFYPQGYKNSYYLGCSTGGRQGWKSIQRFPDDFDGVVAGAPAINFVNLCSWGSRFLKITGPPGSETFVTSAQWSAVHNEILRQCDALDGAVDGIIEDTDLCQPVFETLLCNSTAVDKTSCLTGVQANTVNEVFSAMYGLDGKWLYPRMQPGSELAASFIYYSGNGFKYSDDWYKYVVYNDSNWDHSTWTLADAAAAAAQDPFQISSFDGNISGFQKAGGKVLHYHGLEDAIITSDSSKAYYKHVADTMGLSPSELDHFYRLFPISGMGHCSPGTGAASIGQGSSTYAGDDPQDNVLMAIVQWVEKGIAPEYVRGSKMSRDGTIDYRRKHCKYPKRNRYVGPGKYTDENAWKCV.

The first 19 residues, Met1–Ser19, serve as a signal peptide directing secretion. Intrachain disulfides connect Cys29–Cys78, Cys64–Cys117, Cys190–Cys445, Cys259–Cys276, Cys285–Cys295, and Cys505–Cys527. N-linked (GlcNAc...) asparagine glycans are attached at residues Asn83 and Asn101. Residue Ser191 is the Acyl-ester intermediate of the active site. Asp260, Asp263, Ala265, Asp267, and Ile269 together coordinate Ca(2+). 3 N-linked (GlcNAc...) asparagine glycosylation sites follow: Asn286, Asn354, and Asn385. Active-site charge relay system residues include Asp404 and His444.

The protein belongs to the tannase family.

It localises to the secreted. The enzyme catalyses feruloyl-polysaccharide + H2O = ferulate + polysaccharide.. In terms of biological role, involved in degradation of plant cell walls. Hydrolyzes the feruloyl-arabinose ester bond in arabinoxylans as well as the feruloyl-galactose and feruloyl-arabinose ester bonds in pectin. The protein is Probable feruloyl esterase B-1 (faeB-1) of Aspergillus fumigatus (strain CBS 144.89 / FGSC A1163 / CEA10) (Neosartorya fumigata).